Consider the following 258-residue polypeptide: Imidazole glycerol phosphate synthase subunit HisF (258 aa).

Active-site residues include aspartate 11 and aspartate 130.

The protein belongs to the HisA/HisF family. In terms of assembly, heterodimer of HisH and HisF.

It is found in the cytoplasm. The enzyme catalyses 5-[(5-phospho-1-deoxy-D-ribulos-1-ylimino)methylamino]-1-(5-phospho-beta-D-ribosyl)imidazole-4-carboxamide + L-glutamine = D-erythro-1-(imidazol-4-yl)glycerol 3-phosphate + 5-amino-1-(5-phospho-beta-D-ribosyl)imidazole-4-carboxamide + L-glutamate + H(+). Its pathway is amino-acid biosynthesis; L-histidine biosynthesis; L-histidine from 5-phospho-alpha-D-ribose 1-diphosphate: step 5/9. In terms of biological role, IGPS catalyzes the conversion of PRFAR and glutamine to IGP, AICAR and glutamate. The HisF subunit catalyzes the cyclization activity that produces IGP and AICAR from PRFAR using the ammonia provided by the HisH subunit. In Shigella dysenteriae serotype 1 (strain Sd197), this protein is Imidazole glycerol phosphate synthase subunit HisF.